The chain runs to 219 residues: Probable GTP-binding protein EngB (219 aa).

The region spanning 24-207 (VQPEIAFAGR…HALIESWLRP (184 aa)) is the EngB-type G domain. GTP is bound by residues 32–39 (GRSNAGKS), 59–63 (GRTQH), 81–84 (DLPG), 148–151 (TKCD), and 185–188 (LFSA). Mg(2+)-binding residues include Ser39 and Thr61.

This sequence belongs to the TRAFAC class TrmE-Era-EngA-EngB-Septin-like GTPase superfamily. EngB GTPase family. Mg(2+) is required as a cofactor.

Functionally, necessary for normal cell division and for the maintenance of normal septation. The chain is Probable GTP-binding protein EngB from Burkholderia thailandensis (strain ATCC 700388 / DSM 13276 / CCUG 48851 / CIP 106301 / E264).